Here is a 520-residue protein sequence, read N- to C-terminus: MTDTADHEHVLIVDFGSQVTQLIARRLRESGVYCEIHPYDKVDAVLDSFRPKAVILSGGPASVHEAESPAASKRLFELDVPVLGICYGEQTMCDVLGGKVEPGTTREFGRAEIEIVRESPLLDGLGGAGHFEPVWMSHGDKVTALPMGFETVAVSEGSPFAVIADEGRRFYGIQFHPEVAHTPRGALILRNFTHKIAGLKGDWTMKAFREEAIARIRDQVGDGRIICGLSGGVDSSVAAVLIHEAIGDQLTCVFVDHGLLRLNEAEQVVTMFRDHYNIPLVHVDAAEEFLGALAGVTDPETKRKTIGRLFVEVFDREAAKIEGAAFLAQGTLYPDVIESVSARGGPSAVIKSHHNVGGLPDYMKLKLVEPLRELFKDEVRALGVELGLPPQFVGRHPFPGPGLAIRIPGEVTPERVAILQKADAIYLDEIRKAGLYDSIWQAFAVLLPVRTVGVMGDARTYDEVCALRAVTSTDGMTADFFEFPWEVLSRAATRIINEVRGINRVVYDVTSKPPGTIEWE.

One can recognise a Glutamine amidotransferase type-1 domain in the interval 9-202 (HVLIVDFGSQ…THKIAGLKGD (194 aa)). Residue C86 is the Nucleophile of the active site. Catalysis depends on residues H176 and E178. Positions 203 to 395 (WTMKAFREEA…LGLPPQFVGR (193 aa)) constitute a GMPS ATP-PPase domain. 230-236 (SGGVDSS) provides a ligand contact to ATP.

Homodimer.

The enzyme catalyses XMP + L-glutamine + ATP + H2O = GMP + L-glutamate + AMP + diphosphate + 2 H(+). It functions in the pathway purine metabolism; GMP biosynthesis; GMP from XMP (L-Gln route): step 1/1. Functionally, catalyzes the synthesis of GMP from XMP. This is GMP synthase [glutamine-hydrolyzing] from Phenylobacterium zucineum (strain HLK1).